A 405-amino-acid polypeptide reads, in one-letter code: L-rhamnonate dehydratase (405 aa).

Histidine 33 and arginine 59 together coordinate substrate. Mg(2+) is bound by residues aspartate 226, glutamate 252, and glutamate 280. Catalysis depends on histidine 329, which acts as the Proton acceptor. Residue glutamate 349 coordinates substrate.

The protein belongs to the mandelate racemase/muconate lactonizing enzyme family. RhamD subfamily. As to quaternary structure, homooctamer; tetramer of dimers. Mg(2+) serves as cofactor.

The catalysed reaction is L-rhamnonate = 2-dehydro-3-deoxy-L-rhamnonate + H2O. Its function is as follows. Catalyzes the dehydration of L-rhamnonate to 2-keto-3-deoxy-L-rhamnonate (KDR). Can also dehydrate L-lyxonate and L-mannonate, although less efficiently, but not 2-keto-4-hydroxyheptane-1,7-dioate. In Salmonella typhimurium (strain LT2 / SGSC1412 / ATCC 700720), this protein is L-rhamnonate dehydratase (rhmD).